The primary structure comprises 365 residues: tRNA-specific 2-thiouridylase MnmA (365 aa).

Residues 9–16 (GLSGGVDS) and Met35 each bind ATP. Positions 95-97 (NPD) are interaction with target base in tRNA. The active-site Nucleophile is the Cys100. An intrachain disulfide couples Cys100 to Cys196. Gly124 serves as a coordination point for ATP. The segment at 146-148 (KDQ) is interaction with tRNA. Cys196 (cysteine persulfide intermediate) is an active-site residue. An interaction with tRNA region spans residues 315-316 (RY).

Belongs to the MnmA/TRMU family.

It localises to the cytoplasm. The enzyme catalyses S-sulfanyl-L-cysteinyl-[protein] + uridine(34) in tRNA + AH2 + ATP = 2-thiouridine(34) in tRNA + L-cysteinyl-[protein] + A + AMP + diphosphate + H(+). In terms of biological role, catalyzes the 2-thiolation of uridine at the wobble position (U34) of tRNA, leading to the formation of s(2)U34. The protein is tRNA-specific 2-thiouridylase MnmA of Dechloromonas aromatica (strain RCB).